The following is a 445-amino-acid chain: Tubulin beta-3 chain (445 aa).

The short motif at 1 to 4 (MREI) is the MREI motif element. GTP contacts are provided by Gln11, Glu69, Ser138, Gly142, Thr143, Gly144, Asn204, and Asn226. Glu69 serves as a coordination point for Mg(2+). A disordered region spans residues 425 to 445 (YQDATAEEEGEFEEEAEEEAE). Residues 429 to 445 (TAEEEGEFEEEAEEEAE) are compositionally biased toward acidic residues. Position 438 is a 5-glutamyl polyglutamate (Glu438).

This sequence belongs to the tubulin family. In terms of assembly, dimer of alpha and beta chains. A typical microtubule is a hollow water-filled tube with an outer diameter of 25 nm and an inner diameter of 15 nM. Alpha-beta heterodimers associate head-to-tail to form protofilaments running lengthwise along the microtubule wall with the beta-tubulin subunit facing the microtubule plus end conferring a structural polarity. Microtubules usually have 13 protofilaments but different protofilament numbers can be found in some organisms and specialized cells. Mg(2+) is required as a cofactor. Post-translationally, some glutamate residues at the C-terminus are polyglycylated, resulting in polyglycine chains on the gamma-carboxyl group. Glycylation is mainly limited to tubulin incorporated into axonemes (cilia and flagella) whereas glutamylation is prevalent in neuronal cells, centrioles, axonemes, and the mitotic spindle. Both modifications can coexist on the same protein on adjacent residues, and lowering polyglycylation levels increases polyglutamylation, and reciprocally. The precise function of polyglycylation is still unclear. In terms of processing, some glutamate residues at the C-terminus are polyglutamylated, resulting in polyglutamate chains on the gamma-carboxyl group. Polyglutamylation plays a key role in microtubule severing by spastin (SPAST). SPAST preferentially recognizes and acts on microtubules decorated with short polyglutamate tails: severing activity by SPAST increases as the number of glutamates per tubulin rises from one to eight, but decreases beyond this glutamylation threshold. Highly expressed in testis.

The protein resides in the cytoplasm. Its subcellular location is the cytoskeleton. Tubulin is the major constituent of microtubules, a cylinder consisting of laterally associated linear protofilaments composed of alpha- and beta-tubulin heterodimers. Microtubules grow by the addition of GTP-tubulin dimers to the microtubule end, where a stabilizing cap forms. Below the cap, tubulin dimers are in GDP-bound state, owing to GTPase activity of alpha-tubulin. TUBB3 plays a role in dorsal root ganglion axon projection towards the spinal cord. The protein is Tubulin beta-3 chain of Gallus gallus (Chicken).